The sequence spans 163 residues: Putative MucR family transcriptional regulatory protein RA0938 (163 aa).

This sequence belongs to the ros/MucR family.

The sequence is that of Putative MucR family transcriptional regulatory protein RA0938 from Rhizobium meliloti (strain 1021) (Ensifer meliloti).